Here is a 438-residue protein sequence, read N- to C-terminus: MNFKKTENALSLTLKNFIKSESFGGIFLFLNAVLAMVVANSFVKESYFALWHTPFGFQIGDFFIGFSLHNWIDDVLMALFFLMIGLEIKRELLFGELSSFKKASFPVIAAIGGMIAPGLIYFFLNADTPSQHGFGIPMATDIAFALGVIMLLGKRVPTALKVFLITLAVADDLGAIMVIALFYTTNLKFAWLLGALGVVLVLALLNRLNTHSLIPYLLLGVLLWFCVHQSGIHATIAAVVLAFMIPVKIPKDSKNVELLELGKRYAETSSEVLLTKEQQEILHSIGEKANALQSPLEKLEHFLAPISGYFIMPLFAFANAGVSVDSNINLEVDKVLLGVILGLCLGKPLGIFLITFIGEKFKITSRPKGISWWHILGAGFLAGIGFTMSMFISNLAFTGEHKDAMEVAKIAILLGSLISGIIGALYLFLLDKKATLKK.

Helical transmembrane passes span 23-43 (FGGI…NSFV), 62-82 (FFIG…LFFL), 104-124 (SFPV…YFFL), 133-153 (GFGI…MLLG), 162-182 (VFLI…IALF), 185-205 (TNLK…LALL), 212-232 (SLIP…QSGI), 302-322 (FLAP…NAGV), 337-357 (LGVI…ITFI), 372-392 (WWHI…SMFI), and 410-430 (IAIL…LFLL).

The protein belongs to the NhaA Na(+)/H(+) (TC 2.A.33) antiporter family.

It localises to the cell inner membrane. It catalyses the reaction Na(+)(in) + 2 H(+)(out) = Na(+)(out) + 2 H(+)(in). In terms of biological role, na(+)/H(+) antiporter that extrudes sodium in exchange for external protons. The sequence is that of Na(+)/H(+) antiporter NhaA from Helicobacter acinonychis (strain Sheeba).